The primary structure comprises 448 residues: Methylenetetrahydrofolate--tRNA-(uracil-5-)-methyltransferase TrmFO (448 aa).

10–15 (GAGLAG) provides a ligand contact to FAD.

It belongs to the MnmG family. TrmFO subfamily. FAD serves as cofactor.

The protein localises to the cytoplasm. It carries out the reaction uridine(54) in tRNA + (6R)-5,10-methylene-5,6,7,8-tetrahydrofolate + NADH + H(+) = 5-methyluridine(54) in tRNA + (6S)-5,6,7,8-tetrahydrofolate + NAD(+). The catalysed reaction is uridine(54) in tRNA + (6R)-5,10-methylene-5,6,7,8-tetrahydrofolate + NADPH + H(+) = 5-methyluridine(54) in tRNA + (6S)-5,6,7,8-tetrahydrofolate + NADP(+). Functionally, catalyzes the folate-dependent formation of 5-methyl-uridine at position 54 (M-5-U54) in all tRNAs. This Lactococcus lactis subsp. cremoris (strain SK11) protein is Methylenetetrahydrofolate--tRNA-(uracil-5-)-methyltransferase TrmFO.